Consider the following 529-residue polypeptide: Peptide chain release factor 3 (529 aa).

Residues Asn-11–Met-280 enclose the tr-type G domain. Residues Ser-20–Thr-27, Asp-88–His-92, and Asn-142–Asp-145 each bind GTP.

Belongs to the TRAFAC class translation factor GTPase superfamily. Classic translation factor GTPase family. PrfC subfamily.

It is found in the cytoplasm. In terms of biological role, increases the formation of ribosomal termination complexes and stimulates activities of RF-1 and RF-2. It binds guanine nucleotides and has strong preference for UGA stop codons. It may interact directly with the ribosome. The stimulation of RF-1 and RF-2 is significantly reduced by GTP and GDP, but not by GMP. The protein is Peptide chain release factor 3 of Proteus mirabilis (strain HI4320).